A 446-amino-acid chain; its full sequence is 3-phosphoshikimate 1-carboxyvinyltransferase (446 aa).

3-phosphoshikimate contacts are provided by Lys-30, Ser-31, and Arg-35. Lys-30 provides a ligand contact to phosphoenolpyruvate. Positions 112 and 140 each coordinate phosphoenolpyruvate. 6 residues coordinate 3-phosphoshikimate: Ser-186, Ser-187, Gln-188, Ser-215, Glu-334, and His-361. Gln-188 contacts phosphoenolpyruvate. Catalysis depends on Glu-334, which acts as the Proton acceptor. Arg-365, Arg-406, and Lys-431 together coordinate phosphoenolpyruvate.

Belongs to the EPSP synthase family. As to quaternary structure, monomer.

It is found in the cytoplasm. The catalysed reaction is 3-phosphoshikimate + phosphoenolpyruvate = 5-O-(1-carboxyvinyl)-3-phosphoshikimate + phosphate. It participates in metabolic intermediate biosynthesis; chorismate biosynthesis; chorismate from D-erythrose 4-phosphate and phosphoenolpyruvate: step 6/7. Catalyzes the transfer of the enolpyruvyl moiety of phosphoenolpyruvate (PEP) to the 5-hydroxyl of shikimate-3-phosphate (S3P) to produce enolpyruvyl shikimate-3-phosphate and inorganic phosphate. In Streptomyces avermitilis (strain ATCC 31267 / DSM 46492 / JCM 5070 / NBRC 14893 / NCIMB 12804 / NRRL 8165 / MA-4680), this protein is 3-phosphoshikimate 1-carboxyvinyltransferase.